A 159-amino-acid chain; its full sequence is GDP-mannose mannosyl hydrolase (159 aa).

Residues 2–3 (FL), phenylalanine 8, and arginine 36 contribute to the substrate site. One can recognise a Nudix hydrolase domain in the interval 13 to 153 (RSTPLVSLDF…SRAYFLAEKR (141 aa)). Mg(2+)-binding residues include glycine 49, glutamate 69, and glutamine 122. The short motif at 50–71 (GRVQKDETLEAAFERLTMAELG) is the Nudix box element.

In terms of assembly, homodimer. Mg(2+) serves as cofactor.

The enzyme catalyses GDP-alpha-D-mannose + H2O = D-mannose + GDP + H(+). In terms of biological role, hydrolyzes both GDP-mannose and GDP-glucose. Could participate in the regulation of cell wall biosynthesis by influencing the concentration of GDP-mannose or GDP-glucose in the cell. Might also be involved in the biosynthesis of the slime polysaccharide colanic acid. The polypeptide is GDP-mannose mannosyl hydrolase (Escherichia coli (strain K12)).